Reading from the N-terminus, the 485-residue chain is Aspartyl/glutamyl-tRNA(Asn/Gln) amidotransferase subunit B (485 aa).

The protein belongs to the GatB/GatE family. GatB subfamily. Heterotrimer of A, B and C subunits.

The catalysed reaction is L-glutamyl-tRNA(Gln) + L-glutamine + ATP + H2O = L-glutaminyl-tRNA(Gln) + L-glutamate + ADP + phosphate + H(+). The enzyme catalyses L-aspartyl-tRNA(Asn) + L-glutamine + ATP + H2O = L-asparaginyl-tRNA(Asn) + L-glutamate + ADP + phosphate + 2 H(+). In terms of biological role, allows the formation of correctly charged Asn-tRNA(Asn) or Gln-tRNA(Gln) through the transamidation of misacylated Asp-tRNA(Asn) or Glu-tRNA(Gln) in organisms which lack either or both of asparaginyl-tRNA or glutaminyl-tRNA synthetases. The reaction takes place in the presence of glutamine and ATP through an activated phospho-Asp-tRNA(Asn) or phospho-Glu-tRNA(Gln). This Bordetella petrii (strain ATCC BAA-461 / DSM 12804 / CCUG 43448) protein is Aspartyl/glutamyl-tRNA(Asn/Gln) amidotransferase subunit B.